The following is a 428-amino-acid chain: 3-phosphoshikimate 1-carboxyvinyltransferase (428 aa).

3-phosphoshikimate contacts are provided by Lys-19, Ser-20, and Arg-24. Phosphoenolpyruvate is bound at residue Lys-19. Residues Gly-91 and Arg-119 each contribute to the phosphoenolpyruvate site. Positions 164, 166, 312, and 339 each coordinate 3-phosphoshikimate. Gln-166 contributes to the phosphoenolpyruvate binding site. Residue Asp-312 is the Proton acceptor of the active site. 2 residues coordinate phosphoenolpyruvate: Arg-343 and Arg-386.

The protein belongs to the EPSP synthase family. Monomer.

Its subcellular location is the cytoplasm. It catalyses the reaction 3-phosphoshikimate + phosphoenolpyruvate = 5-O-(1-carboxyvinyl)-3-phosphoshikimate + phosphate. The protein operates within metabolic intermediate biosynthesis; chorismate biosynthesis; chorismate from D-erythrose 4-phosphate and phosphoenolpyruvate: step 6/7. In terms of biological role, catalyzes the transfer of the enolpyruvyl moiety of phosphoenolpyruvate (PEP) to the 5-hydroxyl of shikimate-3-phosphate (S3P) to produce enolpyruvyl shikimate-3-phosphate and inorganic phosphate. The chain is 3-phosphoshikimate 1-carboxyvinyltransferase from Bacillus pumilus (strain SAFR-032).